A 382-amino-acid chain; its full sequence is D-galactonate dehydratase (382 aa).

Aspartate 183 lines the Mg(2+) pocket. Catalysis depends on histidine 185, which acts as the Proton donor. Glutamate 209 and glutamate 235 together coordinate Mg(2+). Histidine 285 (proton acceptor) is an active-site residue.

Belongs to the mandelate racemase/muconate lactonizing enzyme family. GalD subfamily. It depends on Mg(2+) as a cofactor.

It catalyses the reaction D-galactonate = 2-dehydro-3-deoxy-D-galactonate + H2O. The protein operates within carbohydrate acid metabolism; D-galactonate degradation; D-glyceraldehyde 3-phosphate and pyruvate from D-galactonate: step 1/3. In terms of biological role, catalyzes the dehydration of D-galactonate to 2-keto-3-deoxy-D-galactonate. In Xanthomonas campestris pv. campestris (strain 8004), this protein is D-galactonate dehydratase.